The sequence spans 146 residues: SETIDLQGGKAFGLLKAQQEGRLNEINKQFLDDPKYSSDEDLSRKLEAFKQKYMEFDLNGNGDIDIMSLKRMLEKLGVPKTHLELKKLIKEVSSGSGETFSYSIFLKMMLGKRSAILKMILMYEEKAREQEKPTGPPAKKAISELP.

Residue serine 1 is modified to N-acetylserine. Lysine 10 carries the N6-acetyllysine modification. The residue at position 38 (serine 38) is a Phosphoserine. Residues 44–79 (RKLEAFKQKYMEFDLNGNGDIDIMSLKRMLEKLGVP) form the EF-hand 1 domain. Ca(2+)-binding residues include aspartate 57, asparagine 59, asparagine 61, aspartate 63, and threonine 99. The region spanning 81–115 (THLELKKLIKEVSSGSGETFSYSIFLKMMLGKRSA) is the EF-hand 2; degenerate domain. The interval 127-146 (AREQEKPTGPPAKKAISELP) is disordered.

As to quaternary structure, homodimer (Potential). Monomer. Interacts with LCP1. As to expression, microglial cells in the central nervous system and dendritic cells and macrophages in several organs.

It localises to the cytoplasm. Its subcellular location is the cytoskeleton. The protein localises to the cell projection. The protein resides in the ruffle membrane. It is found in the phagocytic cup. Its function is as follows. Actin-binding protein that enhances membrane ruffling and RAC activation. Enhances the actin-bundling activity of LCP1. Binds calcium. Plays a role in RAC signaling and in phagocytosis. May play a role in macrophage activation and function. Promotes the proliferation of vascular smooth muscle cells and of T-lymphocytes. Enhances lymphocyte migration. Plays a role in vascular inflammation. Has a dual influence on glucose-induced insulin secretion: inhibition at low concentration and stimulation at high concentrations. The polypeptide is Allograft inflammatory factor 1 (AIF1) (Sus scrofa (Pig)).